Here is a 269-residue protein sequence, read N- to C-terminus: MDRKIVALDINPANFFDAANDLAIWKDFFNKAQEKHQLVFISSCWQQTIVYLLDLLSLNNVDVIAESGAITWFCKTNQYDYQAFLDLASINVIIHHAVITNSGIFTMGKSRVDDTANLSANYFISLQKYKDFKSLWLTDFEQTLKYENFLKQLGKLELSSIYVFSPQYHMDLAFIDQIASGQPRFTHSNFYPNNLLFTSNKVTKFNALEKYTKTQGLMLKDVHYINLDETLVQNSEQLASAVFIKKQNNEGLTVQDIPDVLQKLCAQLL.

Position 103-110 (103-110 (GIFTMGKS)) interacts with ATP.

This is an uncharacterized protein from Mycoplasma pneumoniae (strain ATCC 29342 / M129 / Subtype 1) (Mycoplasmoides pneumoniae).